A 272-amino-acid chain; its full sequence is Probable nitrilase C965.09 (272 aa).

The region spanning alanine 3–leucine 244 is the CN hydrolase domain. Residue glutamate 45 is the Proton acceptor of the active site. The Proton donor role is filled by lysine 118. The active-site Nucleophile is cysteine 150.

The protein belongs to the carbon-nitrogen hydrolase superfamily.

The protein resides in the cytoplasm. Its subcellular location is the nucleus. In Schizosaccharomyces pombe (strain 972 / ATCC 24843) (Fission yeast), this protein is Probable nitrilase C965.09.